A 295-amino-acid chain; its full sequence is Excinuclease cho (295 aa).

Positions threonine 33–lysine 108 constitute a GIY-YIG domain.

In terms of biological role, incises the DNA at the 3' side of a lesion during nucleotide excision repair. Incises the DNA farther away from the lesion than UvrC. Not able to incise the 5' site of a lesion. In vitro, the incision activity of Cho is UvrA and UvrB dependent. When a lesion remains because UvrC is not able to induce the 3' incision, Cho incises the DNA. Then UvrC makes the 5' incision. The combined action of Cho and UvrC broadens the substrate range of nucleotide excision repair. The sequence is that of Excinuclease cho (cho) from Escherichia coli (strain K12).